Reading from the N-terminus, the 174-residue chain is MDKRIILDDKAIDRTLTRIAHEILENNKGAHDLVLLGIRTRGIYLAQRIQSKIEKIDGITVPTGVLDVTQYRDDITDRVSQDVVAYKIDTDMNNRHVVIVDDVLYTGRTVRASLDAILDHVRPKRISLATLIDRGHRELPIRADFIGKNIPTALSEEIVVMLDEVDDKTQVYIK.

The short motif at 97-109 (VVIVDDVLYTGRT) is the PRPP-binding element.

It belongs to the purine/pyrimidine phosphoribosyltransferase family. PyrR subfamily. In terms of assembly, homodimer and homohexamer; in equilibrium.

The catalysed reaction is UMP + diphosphate = 5-phospho-alpha-D-ribose 1-diphosphate + uracil. Functionally, regulates transcriptional attenuation of the pyrimidine nucleotide (pyr) operon by binding in a uridine-dependent manner to specific sites on pyr mRNA. This disrupts an antiterminator hairpin in the RNA and favors formation of a downstream transcription terminator, leading to a reduced expression of downstream genes. In terms of biological role, also displays a weak uracil phosphoribosyltransferase activity which is not physiologically significant. The protein is Bifunctional protein PyrR of Macrococcus caseolyticus (strain JCSC5402) (Macrococcoides caseolyticum).